The following is a 429-amino-acid chain: Saccharopine dehydrogenase-like oxidoreductase (429 aa).

At A2 the chain carries N-acetylalanine. A Phosphoserine modification is found at S217.

Belongs to the saccharopine dehydrogenase family.

The chain is Saccharopine dehydrogenase-like oxidoreductase (SCCPDH) from Pongo abelii (Sumatran orangutan).